Here is a 425-residue protein sequence, read N- to C-terminus: Adenylosuccinate synthetase (425 aa).

GTP is bound by residues 12 to 18 (GDEGKGK) and 40 to 42 (GHT). The active-site Proton acceptor is the Asp13. 2 residues coordinate Mg(2+): Asp13 and Gly40. IMP-binding positions include 13–16 (DEGK), 38–41 (NAGH), Thr130, Arg144, Gln224, Thr239, and Arg301. His41 serves as the catalytic Proton donor. 297 to 303 (TVSNRRR) contacts substrate. Residues Arg303, 329 to 331 (KLD), and 411 to 413 (STS) contribute to the GTP site.

Belongs to the adenylosuccinate synthetase family. In terms of assembly, homodimer. It depends on Mg(2+) as a cofactor.

The protein resides in the cytoplasm. The enzyme catalyses IMP + L-aspartate + GTP = N(6)-(1,2-dicarboxyethyl)-AMP + GDP + phosphate + 2 H(+). It participates in purine metabolism; AMP biosynthesis via de novo pathway; AMP from IMP: step 1/2. In terms of biological role, plays an important role in the de novo pathway of purine nucleotide biosynthesis. Catalyzes the first committed step in the biosynthesis of AMP from IMP. This chain is Adenylosuccinate synthetase, found in Wolbachia pipientis wMel.